Reading from the N-terminus, the 499-residue chain is Alpha-L-arabinofuranosidase B (499 aa).

An N-terminal signal peptide occupies residues 1–17 (MFSRRNLLALGLAATVS). Residues 18 to 335 (AGPCDIYEAG…ENIVAAKYVV (318 aa)) form a catalytic region. Intrachain disulfides connect Cys21–Cys31, Cys81–Cys86, and Cys176–Cys177. N-linked (GlcNAc...) asparagine glycosylation occurs at Asn83. An N-linked (GlcNAc...) asparagine glycan is attached at Asn202. Asp219 serves as a coordination point for substrate. The active-site Nucleophile is Glu221. Residues Asn222, Asn223, and Gly296 each coordinate substrate. Residue Asp297 is the Proton donor of the active site. The segment at 336-499 (GSLVSGPSFT…SFEIETAFAS (164 aa)) is ABD. The cysteines at positions 401 and 439 are disulfide-linked. Substrate is bound by residues His416, Asn418, Phe419, Asp435, His463, Glu465, Leu468, and Asp488.

This sequence belongs to the glycosyl hydrolase 54 family.

The protein localises to the secreted. The catalysed reaction is Hydrolysis of terminal non-reducing alpha-L-arabinofuranoside residues in alpha-L-arabinosides.. It functions in the pathway glycan metabolism; L-arabinan degradation. Alpha-L-arabinofuranosidase involved in the degradation of arabinoxylan, a major component of plant hemicellulose. Able to hydrolyze 1,5-, 1,3- and 1,2-alpha-linkages not only in L-arabinofuranosyl oligosaccharides, but also in polysaccharides containing terminal non-reducing L-arabinofuranoses in side chains, like L-arabinan, arabinogalactan and arabinoxylan. The protein is Alpha-L-arabinofuranosidase B (abfB) of Aspergillus kawachii (strain NBRC 4308) (White koji mold).